A 44-amino-acid polypeptide reads, in one-letter code: Photosystem I reaction center subunit IX (44 aa).

The chain crosses the membrane as a helical span at residues 7–27; it reads YLSVAPVLSTLWFGSLAGLLI.

Belongs to the PsaJ family.

The protein resides in the plastid. Its subcellular location is the chloroplast thylakoid membrane. Functionally, may help in the organization of the PsaE and PsaF subunits. The polypeptide is Photosystem I reaction center subunit IX (Fagopyrum esculentum subsp. ancestrale (Wild buckwheat)).